The sequence spans 200 residues: Large ribosomal subunit protein uL4 (200 aa).

Residues 42 to 65 (TRAQKTRSEVSGGGAKPWRQKGTG) form a disordered region.

This sequence belongs to the universal ribosomal protein uL4 family. In terms of assembly, part of the 50S ribosomal subunit.

In terms of biological role, one of the primary rRNA binding proteins, this protein initially binds near the 5'-end of the 23S rRNA. It is important during the early stages of 50S assembly. It makes multiple contacts with different domains of the 23S rRNA in the assembled 50S subunit and ribosome. Forms part of the polypeptide exit tunnel. This is Large ribosomal subunit protein uL4 from Vibrio parahaemolyticus serotype O3:K6 (strain RIMD 2210633).